A 138-amino-acid polypeptide reads, in one-letter code: Small ribosomal subunit protein uS12 (138 aa).

The interval Met1–Lys20 is disordered. Asp102 carries the 3-methylthioaspartic acid modification. A disordered region spans residues Asp116–Asn138.

This sequence belongs to the universal ribosomal protein uS12 family. Part of the 30S ribosomal subunit. Contacts proteins S8 and S17. May interact with IF1 in the 30S initiation complex.

Functionally, with S4 and S5 plays an important role in translational accuracy. Interacts with and stabilizes bases of the 16S rRNA that are involved in tRNA selection in the A site and with the mRNA backbone. Located at the interface of the 30S and 50S subunits, it traverses the body of the 30S subunit contacting proteins on the other side and probably holding the rRNA structure together. The combined cluster of proteins S8, S12 and S17 appears to hold together the shoulder and platform of the 30S subunit. This chain is Small ribosomal subunit protein uS12, found in Metamycoplasma arthritidis (strain 158L3-1) (Mycoplasma arthritidis).